Reading from the N-terminus, the 1403-residue chain is DNA-directed RNA polymerase subunit beta' (1403 aa).

4 residues coordinate Zn(2+): cysteine 71, cysteine 73, cysteine 86, and cysteine 89. 3 residues coordinate Mg(2+): aspartate 462, aspartate 464, and aspartate 466. Residues cysteine 820, cysteine 893, cysteine 900, and cysteine 903 each contribute to the Zn(2+) site.

Belongs to the RNA polymerase beta' chain family. As to quaternary structure, the RNAP catalytic core consists of 2 alpha, 1 beta, 1 beta' and 1 omega subunit. When a sigma factor is associated with the core the holoenzyme is formed, which can initiate transcription. The cofactor is Mg(2+). It depends on Zn(2+) as a cofactor.

It catalyses the reaction RNA(n) + a ribonucleoside 5'-triphosphate = RNA(n+1) + diphosphate. In terms of biological role, DNA-dependent RNA polymerase catalyzes the transcription of DNA into RNA using the four ribonucleoside triphosphates as substrates. In Methylobacterium radiotolerans (strain ATCC 27329 / DSM 1819 / JCM 2831 / NBRC 15690 / NCIMB 10815 / 0-1), this protein is DNA-directed RNA polymerase subunit beta'.